The chain runs to 2281 residues: Protein Ycf2 (2281 aa).

1634–1641 provides a ligand contact to ATP; sequence GSIGTGRS.

The protein belongs to the Ycf2 family.

It localises to the plastid. The protein localises to the chloroplast stroma. Functionally, probable ATPase of unknown function. Its presence in a non-photosynthetic plant (Epifagus virginiana) and experiments in tobacco indicate that it has an essential function which is probably not related to photosynthesis. The sequence is that of Protein Ycf2 from Buxus microphylla (Littleleaf boxwood).